The chain runs to 687 residues: Sphingoid long chain base kinase 5 (687 aa).

Residues methionine 1 to glutamine 20 are disordered. Residues cysteine 91 and cysteine 94 are each lipidated (S-palmitoyl cysteine; by AKR1). Over residues isoleucine 101–leucine 116 the composition is skewed to basic and acidic residues. 2 disordered regions span residues isoleucine 101–glutamine 130 and aspartate 180–threonine 207. Low complexity predominate over residues asparagine 193–threonine 207. One can recognise a DAGKc domain in the interval arginine 266–serine 405. ATP is bound by residues asparagine 276–phenylalanine 278 and threonine 308. Serine 333 to glycine 336 contacts substrate. Catalysis depends on aspartate 335, which acts as the Proton donor/acceptor. Residues glutamate 340, glycine 366–glycine 368, arginine 434, and arginine 440 contribute to the ATP site. Residues glutamate 506–aspartate 524 show a composition bias toward acidic residues. The segment at glutamate 506–serine 525 is disordered. Aspartate 652–glutamate 654 serves as a coordination point for ATP.

The protein resides in the golgi apparatus membrane. It catalyses the reaction (4R)-hydroxysphinganine + ATP = (4R)-hydroxysphinganine 1-phosphate + ADP + H(+). The enzyme catalyses a sphingoid base + ATP = a sphingoid 1-phosphate + ADP + H(+). It carries out the reaction sphinganine + ATP = sphinganine 1-phosphate + ADP + H(+). Its function is as follows. Catalyzes the phosphorylation of the sphingoid long chain bases dihydrosphingosine (DHS or sphinganine) and phytosphingosine (PHS) to form dihydrosphingosine 1-phosphate (DHS-1P) and phytosphingosine 1-phosphate (PHS-1P) respectively. Redundant to LCB4, is only responsible for few percent of the total activity. Involved in the biosynthesis of sphingolipids and ceramides. Involved in heat-induced transient cell cycle arrest. Accumulation of phosphorylated sphingoid long chain bases (LCBPs) stimulates calcium influx and activates calcineurin signaling. Involved in heat-stress resistance. The protein is Sphingoid long chain base kinase 5 (LCB5) of Saccharomyces cerevisiae (strain ATCC 204508 / S288c) (Baker's yeast).